The primary structure comprises 492 residues: AAA-ATPase At3g28520 (492 aa).

Residues 7-25 form a helical membrane-spanning segment; it reads IWGFTSTTMASIMFLWPMY. Residue 249–256 coordinates ATP; it reads GPPGTGKS. Disordered regions lie at residues 313 to 334 and 462 to 492; these read KKKK…LKRV and KIEK…MVTK. Composition is skewed to basic and acidic residues over residues 323–332 and 462–484; these read EEKKEAENLK and KIEK…EKQN.

The protein belongs to the AAA ATPase family. BCS1 subfamily. Requires Mg(2+) as cofactor.

It localises to the membrane. The catalysed reaction is ATP + H2O = ADP + phosphate + H(+). This Arabidopsis thaliana (Mouse-ear cress) protein is AAA-ATPase At3g28520.